A 733-amino-acid chain; its full sequence is Phosphoribosylformylglycinamidine synthase subunit PurL (733 aa).

H44 is an active-site residue. ATP contacts are provided by Y47 and K86. E88 is a Mg(2+) binding site. Substrate contacts are provided by residues 89 to 92 (SHNH) and R111. The active-site Proton acceptor is H90. Residue D112 coordinates Mg(2+). Residue Q233 coordinates substrate. D261 serves as a coordination point for Mg(2+). Residue 305–307 (ESQ) participates in substrate binding. Positions 492 and 529 each coordinate ATP. N530 provides a ligand contact to Mg(2+). S532 lines the substrate pocket.

This sequence belongs to the FGAMS family. In terms of assembly, monomer. Part of the FGAM synthase complex composed of 1 PurL, 1 PurQ and 2 PurS subunits.

It localises to the cytoplasm. It catalyses the reaction N(2)-formyl-N(1)-(5-phospho-beta-D-ribosyl)glycinamide + L-glutamine + ATP + H2O = 2-formamido-N(1)-(5-O-phospho-beta-D-ribosyl)acetamidine + L-glutamate + ADP + phosphate + H(+). Its pathway is purine metabolism; IMP biosynthesis via de novo pathway; 5-amino-1-(5-phospho-D-ribosyl)imidazole from N(2)-formyl-N(1)-(5-phospho-D-ribosyl)glycinamide: step 1/2. Part of the phosphoribosylformylglycinamidine synthase complex involved in the purines biosynthetic pathway. Catalyzes the ATP-dependent conversion of formylglycinamide ribonucleotide (FGAR) and glutamine to yield formylglycinamidine ribonucleotide (FGAM) and glutamate. The FGAM synthase complex is composed of three subunits. PurQ produces an ammonia molecule by converting glutamine to glutamate. PurL transfers the ammonia molecule to FGAR to form FGAM in an ATP-dependent manner. PurS interacts with PurQ and PurL and is thought to assist in the transfer of the ammonia molecule from PurQ to PurL. This is Phosphoribosylformylglycinamidine synthase subunit PurL from Thermomicrobium roseum (strain ATCC 27502 / DSM 5159 / P-2).